The sequence spans 708 residues: G-box-binding factor (708 aa).

Disordered regions lie at residues 1–29 (MLSTHHHQGNSSSSSSSSSPSQTIGGSDL) and 123–339 (QQAQ…QTIP). Low complexity-rich tracts occupy residues 11–21 (SSSSSSSSSPS), 123–219 (QQAQ…QHHQ), and 227–316 (SQPQ…SPST). A compositionally biased stretch (basic and acidic residues) spans 324–333 (ETSNSEKKDS). Repeat copies occupy residues 339 to 368 (PKCTRCNEAASWKHDKRRWWCKECKKAFTP) and 481 to 510 (PPCPLCRGISSWKHDKKRYFCKECKKPFTP). The tract at residues 511–604 (VGAGLSPSSS…PTYSPNPSLP (94 aa)) is disordered. A compositionally biased stretch (low complexity) spans 516–590 (SPSSSPSSPK…SSISQSPLQL (75 aa)). Positions 591 to 600 (NYQTPTYSPN) are enriched in polar residues.

The protein localises to the nucleus. Functionally, cAMP-responsive transcriptional activator regulating late gene expression. Essential component of the developmental switch between early and late development. Binds to a number of CA/GT-rich gene regulatory elements. In Dictyostelium discoideum (Social amoeba), this protein is G-box-binding factor (gbfA).